The chain runs to 331 residues: NADH-quinone oxidoreductase subunit H (331 aa).

Helical transmembrane passes span 7 to 27, 81 to 101, 114 to 134, 154 to 174, 187 to 207, 238 to 258, 271 to 291, and 310 to 330; these read ALVTIILTVVKAIVVLLAVVI, MIFTLAPVIAMGALLVAFAIV, IGILFFFAMAGLTVYAVLFAG, ISYEVFLALSLMGIVAQVGSF, VWFIIPQFFGFCTFIIAGVAV, FFVGEYIGIVLVSALLATLFF, WLSFFYFAAKTGFFIMLFILI, and VCLPLTLINLLVTGALVLAAA.

It belongs to the complex I subunit 1 family. In terms of assembly, NDH-1 is composed of 13 different subunits. Subunits NuoA, H, J, K, L, M, N constitute the membrane sector of the complex.

The protein localises to the cell inner membrane. It catalyses the reaction a quinone + NADH + 5 H(+)(in) = a quinol + NAD(+) + 4 H(+)(out). Functionally, NDH-1 shuttles electrons from NADH, via FMN and iron-sulfur (Fe-S) centers, to quinones in the respiratory chain. The immediate electron acceptor for the enzyme in this species is believed to be ubiquinone. Couples the redox reaction to proton translocation (for every two electrons transferred, four hydrogen ions are translocated across the cytoplasmic membrane), and thus conserves the redox energy in a proton gradient. This subunit may bind ubiquinone. The chain is NADH-quinone oxidoreductase subunit H from Pseudomonas aeruginosa (strain ATCC 15692 / DSM 22644 / CIP 104116 / JCM 14847 / LMG 12228 / 1C / PRS 101 / PAO1).